A 245-amino-acid chain; its full sequence is Probable phosphatase PMI1003 (245 aa).

Zn(2+) contacts are provided by histidine 7, histidine 9, histidine 15, histidine 40, glutamate 73, histidine 101, histidine 131, aspartate 192, and histidine 194.

It belongs to the PHP family. In terms of assembly, homotrimer. It depends on Zn(2+) as a cofactor.

The polypeptide is Probable phosphatase PMI1003 (Proteus mirabilis (strain HI4320)).